A 1158-amino-acid chain; its full sequence is MDPRKSIDKPPHHDPILGVSSRWSVSSKDNKEVTFGDLGSKRIRHGSAGADSEMLSMSQKEIKDEDARLIYINDPDRTNERFEFTGNSIKTAKYSVFTFLPRNLFEQFHRVAYIYFLVIAVLNQLPQLAVFGRGASIMPLAFVLLVSAIKDAYEDFRRHRSDRVENNRLALVFEDHQFREKKWKHIRVGEVIKVQSNQTLPCDMVLLATSDPTGVVYVQTTNLDGESNLKTRYAKQETLLKAADMESFNGFIKCEKPNRNIYGFQANMEIDGRRLSLGPSNIILRGCELKNTAWALGVVVYAGGETKAMLNNSGAPSKRSRLETRMNLEIILLSLFLIVLCTIAAATAAVWLRTHRDDLDTILFYRRKDYSERPGGKNYKYYGWGWEIFFTFFMAVIVYQIMIPISLYISMELVRIGQAYFMTNDDQMYDESSDSSFQCRALNINEDLGQIKYLFSDKTGTLTDNKMEFQCACIEGVDYSDREPADSEHPGYSIEVDGIILKPKMRVRVDPVLLQLTKTGKATEEAKRANEFFLSLAACNTIVPIVSNTSDPNVKLVDYQGESPDEQALVYAAAAYGFLLIERTSGHIVINVRGETQRFNVLGLHEFDSDRKRMSVILGCPDMSVKLFVKGADSSMFGVMDESYGGVIHETKIQLHAYSSDGLRTLVVGMRELNDSEFEQWHSSFEAASTALIGRAGLLRKVAGNIETNLRIVGATAIEDKLQRGVPEAIESLRIAGIKVWVLTGDKQETAISIGFSSRLLTRNMRQIVINSNSLDSCRRSLEEANASIASNDESDNVALIIDGTSLIYVLDNDLEDVLFQVACKCSAILCCRVAPFQKAGIVALVKNRTSDMTLAIGDGANDVSMIQMADVGVGISGQEGRQAVMASDFAMGQFRFLVPLLLVHGHWNYQRMGYMILYNFYRNAVFVLILFWYVLFTCYTLTTAITEWSSVLYSVIYTAIPTIIIGILDKDLGRQTLLDHPQLYGVGQRAEGYSTTLFWYTMIDTIWQSAAIFFIPMFAYWGSTIDTSSLGDLWTIAAVVVVNLHLAMDVIRWNWITHAAIWGSIVAACICVIVIDVIPTLPGYWAIFQVGKTWMFWFCLLAIVVTSLLPRFAIKFLVEYYRPSDVRIAREAEKLGTFRESQPVGVEMNLIQDPPRR.

Residues 1–15 are compositionally biased toward basic and acidic residues; that stretch reads MDPRKSIDKPPHHDP. Residues 1 to 30 form a disordered region; that stretch reads MDPRKSIDKPPHHDPILGVSSRWSVSSKDN. The Cytoplasmic portion of the chain corresponds to 1 to 100; it reads MDPRKSIDKP…TAKYSVFTFL (100 aa). The helical transmembrane segment at 101 to 122 threads the bilayer; it reads PRNLFEQFHRVAYIYFLVIAVL. Topologically, residues 123-127 are extracellular; the sequence is NQLPQ. Residues 128 to 150 traverse the membrane as a helical segment; that stretch reads LAVFGRGASIMPLAFVLLVSAIK. The Cytoplasmic portion of the chain corresponds to 151-329; the sequence is DAYEDFRRHR…SRLETRMNLE (179 aa). A helical membrane pass occupies residues 330–351; sequence IILLSLFLIVLCTIAAATAAVW. Topologically, residues 352–391 are extracellular; sequence LRTHRDDLDTILFYRRKDYSERPGGKNYKYYGWGWEIFFT. Residues 392–409 traverse the membrane as a helical segment; sequence FFMAVIVYQIMIPISLYI. The Cytoplasmic portion of the chain corresponds to 410-914; the sequence is SMELVRIGQA…HGHWNYQRMG (505 aa). Catalysis depends on Asp-457, which acts as the 4-aspartylphosphate intermediate. Positions 859 and 863 each coordinate Mg(2+). A helical transmembrane segment spans residues 915-934; sequence YMILYNFYRNAVFVLILFWY. Over 935 to 948 the chain is Extracellular; it reads VLFTCYTLTTAITE. Residues 949–968 traverse the membrane as a helical segment; that stretch reads WSSVLYSVIYTAIPTIIIGI. Topologically, residues 969-998 are cytoplasmic; that stretch reads LDKDLGRQTLLDHPQLYGVGQRAEGYSTTL. Residues 999–1020 traverse the membrane as a helical segment; that stretch reads FWYTMIDTIWQSAAIFFIPMFA. Over 1021–1027 the chain is Extracellular; sequence YWGSTID. Residues 1028 to 1050 form a helical membrane-spanning segment; it reads TSSLGDLWTIAAVVVVNLHLAMD. Residues 1051–1056 are Cytoplasmic-facing; sequence VIRWNW. The helical transmembrane segment at 1057-1077 threads the bilayer; that stretch reads ITHAAIWGSIVAACICVIVID. Over 1078 to 1090 the chain is Extracellular; that stretch reads VIPTLPGYWAIFQ. A helical transmembrane segment spans residues 1091–1115; sequence VGKTWMFWFCLLAIVVTSLLPRFAI. Over 1116–1158 the chain is Cytoplasmic; that stretch reads KFLVEYYRPSDVRIAREAEKLGTFRESQPVGVEMNLIQDPPRR.

The protein belongs to the cation transport ATPase (P-type) (TC 3.A.3) family. Type IV subfamily. In terms of tissue distribution, expressed in roots, flowers, anthers, leaves, vascular tissues and stems.

The protein localises to the endoplasmic reticulum membrane. The protein resides in the cell membrane. The enzyme catalyses ATP + H2O + phospholipidSide 1 = ADP + phosphate + phospholipidSide 2.. Functionally, involved in transport of phospholipids. Contributes to transmembrane flipping of lipids. Has activity with phosphatidylserine and with a much lower efficiency with phosphatidylethanolamine, but not with phosphatidylcholine. This Arabidopsis thaliana (Mouse-ear cress) protein is Phospholipid-transporting ATPase 1.